The sequence spans 848 residues: Adenylate cyclase (848 aa).

The segment at 1–535 (MYLYIETLKQ…DVSHHFPLRL (535 aa)) is catalytic. Residues 541 to 848 (KALYSPCEIR…DAPLLQQYFS (308 aa)) are regulatory. H609 carries the phosphohistidine; by CRR modification.

Belongs to the adenylyl cyclase class-1 family.

The protein resides in the cytoplasm. The catalysed reaction is ATP = 3',5'-cyclic AMP + diphosphate. The sequence is that of Adenylate cyclase (cyaA) from Salmonella typhi.